The following is a 1503-amino-acid chain: DNA-directed RNA polymerase subunit beta' (1503 aa).

The Zn(2+) site is built by cysteine 71, cysteine 73, cysteine 86, and cysteine 89. Positions 470, 472, and 474 each coordinate Mg(2+). Residues cysteine 800, cysteine 874, cysteine 881, and cysteine 884 each contribute to the Zn(2+) site.

It belongs to the RNA polymerase beta' chain family. In terms of assembly, the RNAP catalytic core consists of 2 alpha, 1 beta, 1 beta' and 1 omega subunit. When a sigma factor is associated with the core the holoenzyme is formed, which can initiate transcription. Mg(2+) is required as a cofactor. Requires Zn(2+) as cofactor.

The catalysed reaction is RNA(n) + a ribonucleoside 5'-triphosphate = RNA(n+1) + diphosphate. DNA-dependent RNA polymerase catalyzes the transcription of DNA into RNA using the four ribonucleoside triphosphates as substrates. The sequence is that of DNA-directed RNA polymerase subunit beta' from Sulfurimonas denitrificans (strain ATCC 33889 / DSM 1251) (Thiomicrospira denitrificans (strain ATCC 33889 / DSM 1251)).